We begin with the raw amino-acid sequence, 586 residues long: Alanine racemase ungC (586 aa).

The disordered stretch occupies residues 187 to 206; it reads RVGALPAAASTASPMGSSLP. The segment covering 196 to 206 has biased composition (polar residues); it reads STASPMGSSLP.

It belongs to the trans-sulfuration enzymes family. Requires pyridoxal 5'-phosphate as cofactor.

The catalysed reaction is L-alanine = D-alanine. It functions in the pathway secondary metabolite biosynthesis. In terms of biological role, alanine racemase; part of the gene cluster that mediates the biosynthesis of the unguisins, gamma-aminobutyric acid (GABA)-containing fungal cyclic heptapeptides with the amino acid sequence cyclo-(D-Ala1-D-Val2-L-Phe3-D-Val4-D-Ala5-D-Trp6-GABA7) for unguisin A and cyclo-(D-Ala1-D-Val2-L-Leu3-D-Val4-D-Ala5-D-Trp6-GABA7) for unguisin B. Within the pathway, the alanine racemase ungC catalyzes the interconversion of L-alanine and D-alanine, providing the D-alanine which is accepted by the first adenylation domain of the nonribosomal peptide synthetase (NRPS) ungA. UngA is the main enzyme within the cluster which condenses the 7 residues using its respective 7 modules. The terminal condensation domain (Ct) is involved in cyclization with D-alanine and thereby releasing of unguisins A and B. Finally, the hydrolase ungD catalyzes the hydrolysis between the D-tryptophan and GABA residues of unguisins A and B to produce the corresponding linear peptides. In Aspergillus violaceofuscus (strain CBS 115571), this protein is Alanine racemase ungC.